We begin with the raw amino-acid sequence, 112 residues long: MEKVLILLLVALAVAYAVPDPRGIIINLDEGELCLNSAQCTSKCCHREDGLSLARCAPKASENSECSAFTLYGIYYKCPCERGLTCNVDKTIVGSITNTNFGVCLDLGRATE.

A signal peptide spans 1–17 (MEKVLILLLVALAVAYA). Positions 18 to 22 (VPDPR) are cleaved as a propeptide — enterostatin, activation peptide. 5 disulfide bridges follow: Cys-34/Cys-45, Cys-40/Cys-56, Cys-44/Cys-78, Cys-66/Cys-86, and Cys-80/Cys-104.

This sequence belongs to the colipase family. Forms a 1:1 stoichiometric complex with pancreatic lipase.

It localises to the secreted. In terms of biological role, colipase is a cofactor of pancreatic lipase. It allows the lipase to anchor itself to the lipid-water interface. Without colipase the enzyme is washed off by bile salts, which have an inhibitory effect on the lipase. Functionally, enterostatin has a biological activity as a satiety signal. This is Colipase (CLPS) from Bos taurus (Bovine).